Here is a 392-residue protein sequence, read N- to C-terminus: Methylthioribose kinase (392 aa).

Residues Asn-38, Lys-53, and 107–109 (EDL) contribute to the ATP site. Asp-225 serves as a coordination point for substrate. Residue 242–244 (DPE) coordinates ATP. Arg-332 serves as a coordination point for substrate.

The protein belongs to the methylthioribose kinase family. As to quaternary structure, homodimer.

It carries out the reaction 5-(methylsulfanyl)-D-ribose + ATP = 5-(methylsulfanyl)-alpha-D-ribose 1-phosphate + ADP + H(+). The protein operates within amino-acid biosynthesis; L-methionine biosynthesis via salvage pathway; S-methyl-5-thio-alpha-D-ribose 1-phosphate from S-methyl-5'-thioadenosine (hydrolase route): step 2/2. Catalyzes the phosphorylation of methylthioribose into methylthioribose-1-phosphate. The chain is Methylthioribose kinase from Bacillus mycoides (strain KBAB4) (Bacillus weihenstephanensis).